The following is a 782-amino-acid chain: General transcription and DNA repair factor IIH helicase/translocase subunit XPB (782 aa).

The segment covering 1–11 has biased composition (basic and acidic residues); that stretch reads MGRKDKSDREK. Disordered regions lie at residues 1–47 and 211–242; these read MGRK…VDES and TISS…SGTQ. The short motif at 6–17 is the Nuclear localization signal element; the sequence is KSDREKKSKKRY. The segment covering 19 to 28 has biased composition (acidic residues); the sequence is EDEEEDEEVI. Over residues 211-223 the composition is skewed to low complexity; the sequence is TISSKSAISKSQQ. The segment covering 224–242 has biased composition (polar residues); it reads DNGGPSSSQPADGQRSGTQ. Positions 326-487 constitute a Helicase ATP-binding domain; it reads MFGNGRARSG…DLNFLIGPKL (162 aa). 339-346 is a binding site for ATP; the sequence is LPCGAGKS. The DEVH box signature appears at 440 to 443; it reads DEVH. The 161-residue stretch at 541–701 folds into the Helicase C-terminal domain; sequence RACQFLIRFH…LAGMEEEDLM (161 aa).

The protein belongs to the helicase family. RAD25/XPB subfamily. Component of the 7-subunit TFIIH core complex composed of XPB/ERCC3, XPD/ERCC2, GTF2H1, GTF2H2, GTF2H3, GTF2H4 and GTF2H5, which is active in NER. The core complex associates with the 3-subunit CDK-activating kinase (CAK) module composed of CCNH/cyclin H, CDK7 and MNAT1 to form the 10-subunit holoenzyme (holo-TFIIH) active in transcription. Interacts with PUF60. Interacts with ATF7IP. Interacts with Epstein-Barr virus EBNA2.

It localises to the nucleus. It carries out the reaction Couples ATP hydrolysis with the unwinding of duplex DNA by translocating in the 3'-5' direction.. It catalyses the reaction ATP + H2O = ADP + phosphate + H(+). ATP-dependent 3'-5' DNA helicase/translocase; binds dsDNA rather than ssDNA, unzipping it in a translocase rather than classical helicase activity. Component of the general transcription and DNA repair factor IIH (TFIIH) core complex. When complexed to CDK-activating kinase (CAK), involved in RNA transcription by RNA polymerase II. The ATPase activity of XPB/ERCC3, but not its helicase activity, is required for DNA opening; it may wrap around the damaged DNA wedging it open, causing localized melting and twisting that allows XPD/ERCC2 helicase to anchor. The ATP-dependent helicase activity of XPB/ERCC3 may be required for promoter escape. Also involved in transcription-coupled nucleotide excision repair (NER) of damaged DNA. In NER, TFIIH acts by opening DNA around the lesion to allow the excision of the damaged oligonucleotide and its replacement by a new DNA fragment. The sequence is that of General transcription and DNA repair factor IIH helicase/translocase subunit XPB (ercc3) from Danio rerio (Zebrafish).